We begin with the raw amino-acid sequence, 364 residues long: DNA polymerase IV (364 aa).

In terms of domain architecture, UmuC spans 14 to 198 (IIHIDMDAFF…LPIEKFHGVG (185 aa)). Positions 18 and 116 each coordinate Mg(2+). Glu-117 is a catalytic residue.

It belongs to the DNA polymerase type-Y family. As to quaternary structure, monomer. The cofactor is Mg(2+).

It localises to the cytoplasm. It carries out the reaction DNA(n) + a 2'-deoxyribonucleoside 5'-triphosphate = DNA(n+1) + diphosphate. Functionally, poorly processive, error-prone DNA polymerase involved in untargeted mutagenesis. Copies undamaged DNA at stalled replication forks, which arise in vivo from mismatched or misaligned primer ends. These misaligned primers can be extended by PolIV. Exhibits no 3'-5' exonuclease (proofreading) activity. May be involved in translesional synthesis, in conjunction with the beta clamp from PolIII. This Streptococcus pyogenes serotype M6 (strain ATCC BAA-946 / MGAS10394) protein is DNA polymerase IV.